Here is a 107-residue protein sequence, read N- to C-terminus: Homeobox protein HD-3 (107 aa).

The segment at residues 6-65 (SKAPRTRMTAGQTRVLMSFFKDNPFPSTTAREKLSKVLGVGPRTVQIWFQNQRQKARGQA) is a DNA-binding region (homeobox).

The protein localises to the nucleus. In Encephalitozoon cuniculi (strain GB-M1) (Microsporidian parasite), this protein is Homeobox protein HD-3 (HD-3).